The primary structure comprises 311 residues: Ketoisovalerate oxidoreductase subunit VorB (311 aa).

As to quaternary structure, heterotetramer of one alpha, one beta, one delta and one gamma chain.

It carries out the reaction 3-methyl-2-oxobutanoate + 2 oxidized [2Fe-2S]-[ferredoxin] + CoA = 2-methylpropanoyl-CoA + 2 reduced [2Fe-2S]-[ferredoxin] + CO2 + H(+). This chain is Ketoisovalerate oxidoreductase subunit VorB (vorB), found in Pyrococcus horikoshii (strain ATCC 700860 / DSM 12428 / JCM 9974 / NBRC 100139 / OT-3).